A 127-amino-acid chain; its full sequence is Small ribosomal subunit protein uS12 (127 aa).

The tract at residues 8 to 28 is disordered; the sequence is IRTEREKARQKTKSPALKQCP. Residue Asp89 is modified to 3-methylthioaspartic acid. A disordered region spans residues 102–127; that stretch reads LDTAGVKDRKQGRSKYGTKRPKEAKK. Residues 113-127 are compositionally biased toward basic residues; that stretch reads GRSKYGTKRPKEAKK.

It belongs to the universal ribosomal protein uS12 family. As to quaternary structure, part of the 30S ribosomal subunit. Contacts proteins S8 and S17. May interact with IF1 in the 30S initiation complex.

With S4 and S5 plays an important role in translational accuracy. Its function is as follows. Interacts with and stabilizes bases of the 16S rRNA that are involved in tRNA selection in the A site and with the mRNA backbone. Located at the interface of the 30S and 50S subunits, it traverses the body of the 30S subunit contacting proteins on the other side and probably holding the rRNA structure together. The combined cluster of proteins S8, S12 and S17 appears to hold together the shoulder and platform of the 30S subunit. The sequence is that of Small ribosomal subunit protein uS12 from Nostoc sp. (strain PCC 7120 / SAG 25.82 / UTEX 2576).